A 243-amino-acid polypeptide reads, in one-letter code: UPF0173 metal-dependent hydrolase Caur_2542 (243 aa).

This sequence belongs to the UPF0173 family.

In Chloroflexus aurantiacus (strain ATCC 29366 / DSM 635 / J-10-fl), this protein is UPF0173 metal-dependent hydrolase Caur_2542.